The primary structure comprises 537 residues: Probable glucomannan 4-beta-mannosyltransferase 15 (537 aa).

The chain crosses the membrane as a helical span at residues 50-70 (FIVPLFKCIVVMCLIISLLVF). Asp-150 is an active-site residue. The substrate site is built by Asp-209 and Asp-211. The active site involves Asp-303. Helical transmembrane passes span 382-402 (IVVH…SVFL), 418-438 (VITL…IFWV), 494-514 (EMMM…FGNA), and 515-535 (FLYL…VGFV).

Belongs to the glycosyltransferase 2 family. Plant cellulose synthase-like A subfamily.

It localises to the golgi apparatus membrane. The enzyme catalyses GDP-mannose + (glucomannan)n = GDP + (glucomannan)n+1.. In terms of biological role, probable mannan synthase which consists of a 4-beta-mannosyltransferase activity on mannan using GDP-mannose. The beta-1,4-mannan product is the backbone for galactomannan synthesis by galactomannan galactosyltransferase. Galactomannan is a noncellulosic polysaccharides of plant cell wall. This Arabidopsis thaliana (Mouse-ear cress) protein is Probable glucomannan 4-beta-mannosyltransferase 15.